The primary structure comprises 323 residues: Chitinase 1 (323 aa).

The N-terminal stretch at 1–20 (MRALAVVVVATAFAVVAVRG) is a signal peptide. Residues 21 to 61 (EQCGSQAGGALCPNCLCCSQYGWCGSTSAYCGSGCQSQCSG) enclose the Chitin-binding type-1 domain. Intrachain disulfides connect Cys-23-Cys-38, Cys-32-Cys-44, Cys-35-Cys-63, Cys-37-Cys-51, Cys-55-Cys-59, Cys-100-Cys-162, Cys-176-Cys-184, and Cys-283-Cys-315. The active-site Proton donor is the Glu-144.

It belongs to the glycosyl hydrolase 19 family. Chitinase class I subfamily. In terms of tissue distribution, expressed in roots, leaves, sheaths and meristems.

It catalyses the reaction Random endo-hydrolysis of N-acetyl-beta-D-glucosaminide (1-&gt;4)-beta-linkages in chitin and chitodextrins.. Functionally, hydrolyzes chitin and may play a role in defense against fungal pathogens containing chitin. The chain is Chitinase 1 (Cht1) from Oryza sativa subsp. japonica (Rice).